The chain runs to 554 residues: Glucose-6-phosphate isomerase (554 aa).

Glutamate 359 acts as the Proton donor in catalysis. Active-site residues include histidine 390 and lysine 518.

It belongs to the GPI family.

It localises to the cytoplasm. The catalysed reaction is alpha-D-glucose 6-phosphate = beta-D-fructose 6-phosphate. The protein operates within carbohydrate biosynthesis; gluconeogenesis. It functions in the pathway carbohydrate degradation; glycolysis; D-glyceraldehyde 3-phosphate and glycerone phosphate from D-glucose: step 2/4. Functionally, catalyzes the reversible isomerization of glucose-6-phosphate to fructose-6-phosphate. In Pseudomonas fluorescens (strain Pf0-1), this protein is Glucose-6-phosphate isomerase.